The primary structure comprises 888 residues: Prodigiosin synthesizing transferase PigC (888 aa).

The protein belongs to the PigC family.

Its pathway is antibiotic biosynthesis; prodigiosin biosynthesis. In terms of biological role, involved in the biosynthesis of 2-methyl-3-n-amyl-pyrrole (MAP), one of the terminal products involved in the biosynthesis of the red antibiotic prodigiosin (Pig). Catalyzes the transfer of 2-methyl-3-n-amyl-pyrrole (MAP) to 4-methoxy-2,2'-bipyrrole-5-carbaldehyde (MBC) to yield prodigiosin. It is able to use substrates with a variety of monocyclic rings in place of the pyrrolic ring A of its natural substrate. This is Prodigiosin synthesizing transferase PigC from Serratia marcescens.